Reading from the N-terminus, the 425-residue chain is Enolase 2 (425 aa).

Residue Gln163 participates in (2R)-2-phosphoglycerate binding. Glu205 acts as the Proton donor in catalysis. Residues Asp242, Glu285, and Asp312 each coordinate Mg(2+). (2R)-2-phosphoglycerate is bound by residues Lys337, Arg366, Ser367, and Lys388. Lys337 acts as the Proton acceptor in catalysis.

Belongs to the enolase family. The cofactor is Mg(2+).

It localises to the cytoplasm. It is found in the secreted. Its subcellular location is the cell surface. It catalyses the reaction (2R)-2-phosphoglycerate = phosphoenolpyruvate + H2O. It functions in the pathway carbohydrate degradation; glycolysis; pyruvate from D-glyceraldehyde 3-phosphate: step 4/5. Functionally, catalyzes the reversible conversion of 2-phosphoglycerate (2-PG) into phosphoenolpyruvate (PEP). It is essential for the degradation of carbohydrates via glycolysis. This is Enolase 2 from Cupriavidus metallidurans (strain ATCC 43123 / DSM 2839 / NBRC 102507 / CH34) (Ralstonia metallidurans).